Here is a 165-residue protein sequence, read N- to C-terminus: Protein phosphatase 1 regulatory subunit 14C (165 aa).

The span at 1 to 12 (MSVATGSSETAG) shows a compositional bias: low complexity. A disordered region spans residues 1 to 73 (MSVATGSSET…QRRHQQGKVT (73 aa)). Residue S2 is modified to N-acetylserine. Residue S25 is modified to Phosphoserine. The residue at position 27 (R27) is an Omega-N-methylarginine. Residue S33 is modified to Phosphoserine. Low complexity predominate over residues 35–63 (GSSSGSGSSREDSAPVATAAAAGQVQQQQ). T73 is subject to Phosphothreonine; by ILK1.

Belongs to the PP1 inhibitor family. Has over 600-fold higher inhibitory activity when phosphorylated, creating a molecular switch for regulating the phosphorylation status of PPP1CA substrates and smooth muscle contraction. The main inhibitory site appears to be Thr-73. In terms of tissue distribution, detected in breast cancer.

It localises to the cytoplasm. Its subcellular location is the membrane. Inhibitor of the PP1 regulatory subunit PPP1CA. The protein is Protein phosphatase 1 regulatory subunit 14C (PPP1R14C) of Homo sapiens (Human).